The sequence spans 207 residues: Probable GTP-binding protein EngB (207 aa).

Residues 24–199 enclose the EngB-type G domain; that stretch reads GGYEVAFAGR…RAIVGAWLGL (176 aa). Residues 32–39, 59–63, 77–80, 144–147, and 178–180 contribute to the GTP site; these read GRSNAGKS, GRTQQ, DLPG, TKAD, and YSG. 2 residues coordinate Mg(2+): serine 39 and threonine 61.

It belongs to the TRAFAC class TrmE-Era-EngA-EngB-Septin-like GTPase superfamily. EngB GTPase family. Mg(2+) is required as a cofactor.

In terms of biological role, necessary for normal cell division and for the maintenance of normal septation. This is Probable GTP-binding protein EngB from Xanthomonas euvesicatoria pv. vesicatoria (strain 85-10) (Xanthomonas campestris pv. vesicatoria).